Here is an 86-residue protein sequence, read N- to C-terminus: UPF0291 protein LBA1279 (86 aa).

Basic and acidic residues-rich tracts occupy residues 1–27 (MNKD…KENE) and 65–75 (NGKEVTSEKAK). Disordered stretches follow at residues 1-36 (MNKD…EEEE) and 65-86 (NGKE…LRKD). Basic residues predominate over residues 76–86 (QAQRKKGLRKD).

The protein belongs to the UPF0291 family.

It localises to the cytoplasm. In Lactobacillus acidophilus (strain ATCC 700396 / NCK56 / N2 / NCFM), this protein is UPF0291 protein LBA1279.